Reading from the N-terminus, the 464-residue chain is GTPase Der (464 aa).

2 EngA-type G domains span residues 3-166 (ALVA…PVLE) and 177-350 (LQFA…QSAN). GTP-binding positions include 9-16 (GRPNVGKS), 56-60 (DTGGV), 118-121 (NKAE), 183-190 (GRPNVGKS), 230-234 (DTAGI), and 295-298 (NKWD). A KH-like domain is found at 351–435 (SHLPTGELNR…PIALEFRTVK (85 aa)).

Belongs to the TRAFAC class TrmE-Era-EngA-EngB-Septin-like GTPase superfamily. EngA (Der) GTPase family. As to quaternary structure, associates with the 50S ribosomal subunit.

In terms of biological role, GTPase that plays an essential role in the late steps of ribosome biogenesis. The polypeptide is GTPase Der (Nitrosococcus oceani (strain ATCC 19707 / BCRC 17464 / JCM 30415 / NCIMB 11848 / C-107)).